A 398-amino-acid chain; its full sequence is Acetate kinase (398 aa).

A Mg(2+)-binding site is contributed by Asn-8. Lys-15 lines the ATP pocket. Position 89 (Arg-89) interacts with substrate. Asp-146 functions as the Proton donor/acceptor in the catalytic mechanism. ATP contacts are provided by residues 206–210 (HIGNG), 281–283 (DLR), and 329–333 (GVGEN). Residue Glu-383 participates in Mg(2+) binding.

This sequence belongs to the acetokinase family. Homodimer. Mg(2+) is required as a cofactor. Requires Mn(2+) as cofactor.

Its subcellular location is the cytoplasm. It carries out the reaction acetate + ATP = acetyl phosphate + ADP. It functions in the pathway metabolic intermediate biosynthesis; acetyl-CoA biosynthesis; acetyl-CoA from acetate: step 1/2. Catalyzes the formation of acetyl phosphate from acetate and ATP. Can also catalyze the reverse reaction. In Macrococcus caseolyticus (strain JCSC5402) (Macrococcoides caseolyticum), this protein is Acetate kinase.